Reading from the N-terminus, the 354-residue chain is Membrane progestin receptor alpha-B (354 aa).

The Cytoplasmic segment spans residues 1–76; sequence MATVVMEQIG…LTLFQRHNES (76 aa). A helical transmembrane segment spans residues 77 to 97; sequence VNVWTHLLASLIILVKFQELS. Over 98 to 110 the chain is Extracellular; sequence ETVDFLRDPHAQP. A helical membrane pass occupies residues 111 to 131; that stretch reads MFILLLAAFTYLGCSALAHLL. Residues 132–141 are Cytoplasmic-facing; it reads SAKSEISHYT. A helical transmembrane segment spans residues 142-162; sequence FYFLDYVGVAVYQYGSALAHF. At 163–175 the chain is on the extracellular side; sequence YYVVEEEWHAQVR. The chain crosses the membrane as a helical span at residues 176-196; it reads TFFLPASAFLAWLSCTGCCYG. Residues 197–244 are Cytoplasmic-facing; sequence KYASPKLPKFVHKLFQVVPSGLAYCLDISPVLHRIYRCYSSEHWCADQ. A helical membrane pass occupies residues 245–265; it reads AVVYHCYQVLFFLISAYFFSY. Residues 266–277 lie on the Extracellular side of the membrane; that stretch reads PHPERWFPGRCD. Residues 278-298 traverse the membrane as a helical segment; sequence FIGQGHQIFHVFLVLCTLVQI. Over 299–318 the chain is Cytoplasmic; it reads EAVRLDYTERRRLYEHLHGD. Residues 319–339 traverse the membrane as a helical segment; that stretch reads LAHDAVALFIFTACCSALTAF. The Extracellular segment spans residues 340-354; that stretch reads YVRKRVKTYLEEKQE.

The protein belongs to the ADIPOR family.

Its subcellular location is the cell membrane. Its function is as follows. Steroid membrane receptor. Signals upon progestin binding, resulting in rapid activation of MAPK and down-regulation of adenylyl cyclase activity. Interacts with steroids with varying degrees of affinity, showing specificity for activation by the maturation-inducing steroid (MIS) 4-pregnen-17,20beta-diol-3-one (17,20beta-DHP). Capable of mediating progestin-induced oocyte maturation. The polypeptide is Membrane progestin receptor alpha-B (paqr7b) (Danio rerio (Zebrafish)).